The chain runs to 136 residues: MARTKQTARKSTGGKAPRKQLASKAARKSAPSTGGVKKPHRYKPGTVALREIRRFQKSTELLIRKLPFQRLVREIAQDFKTDLRFQSSAIGALQESVEAYLVSLFEDTNLAAIHAKRVTIQKKDIKLARRLRGERS.

Residues 1–43 (MARTKQTARKSTGGKAPRKQLASKAARKSAPSTGGVKKPHRYK) form a disordered region. The residue at position 5 (K5) is an N6,N6,N6-trimethyllysine; alternate. K5 is modified (N6,N6-dimethyllysine; alternate). K5 and K10 each carry N6-methyllysine; alternate. An N6-acetyllysine; alternate modification is found at K10. A Phosphoserine modification is found at S11. Residue K15 is modified to N6,N6-dimethyllysine; alternate. Residues K15, K19, K24, K28, and K37 each carry the N6-methyllysine; alternate modification. K15, K19, K24, K28, and K37 each carry N6-acetyllysine; alternate. N6,N6,N6-trimethyllysine; alternate is present on residues K28 and K37. 2 positions are modified to N6,N6-dimethyllysine; alternate: K28 and K37. N6-acetyllysine occurs at positions 57 and 65. K80 carries the post-translational modification N6,N6,N6-trimethyllysine; alternate. N6,N6-dimethyllysine; alternate is present on K80. K80 carries the post-translational modification N6-methyllysine; alternate.

It belongs to the histone H3 family. The nucleosome is a histone octamer containing two molecules each of H2A, H2B, H3 and H4 assembled in one H3-H4 heterotetramer and two H2A-H2B heterodimers. The octamer wraps approximately 147 bp of DNA. Phosphorylated by IPL1 to form H3S10ph. H3S10ph promotes subsequent H3K14ac formation by GCN5 and is required for transcriptional activation through TBP recruitment to the promoters. Post-translationally, mono-, di- and trimethylated by the COMPASS complex to form H3K4me1/2/3. H3K4me activates gene expression by regulating transcription elongation and plays a role in telomere length maintenance. H3K4me enrichment correlates with transcription levels, and occurs in a 5' to 3' gradient with H3K4me3 enrichment at the 5'-end of genes, shifting to H3K4me2 and then H3K4me1. Methylated by SET2 to form H3K36me. H3K36me represses gene expression. Methylated by DOT1 to form H3K79me. H3K79me is required for association of SIR proteins with telomeric regions and for telomeric silencing. The COMPASS-mediated formation of H3K4me2/3 and the DOT1-mediated formation of H3K79me require H2BK123ub1. In terms of processing, acetylation of histone H3 leads to transcriptional activation. H3K14ac formation by GCN5 is promoted by H3S10ph. H3K14ac can also be formed by ESA1. H3K56ac formation occurs predominantly in newly synthesized H3 molecules during G1, S and G2/M of the cell cycle and may be involved in DNA repair.

The protein localises to the nucleus. It localises to the chromosome. Functionally, core component of nucleosome. Nucleosomes wrap and compact DNA into chromatin, limiting DNA accessibility to the cellular machineries which require DNA as a template. Histones thereby play a central role in transcription regulation, DNA repair, DNA replication and chromosomal stability. DNA accessibility is regulated via a complex set of post-translational modifications of histones, also called histone code, and nucleosome remodeling. The polypeptide is Histone H3 (HHT1) (Candida glabrata (strain ATCC 2001 / BCRC 20586 / JCM 3761 / NBRC 0622 / NRRL Y-65 / CBS 138) (Yeast)).